The primary structure comprises 136 residues: Peptide methionine sulfoxide reductase MsrB (136 aa).

Residues 9 to 136 (DAEWKALLAE…NSASLDFKPK (128 aa)) enclose the MsrB domain. Cysteine 53, cysteine 56, cysteine 102, and cysteine 105 together coordinate Zn(2+). Cysteine 125 functions as the Nucleophile in the catalytic mechanism.

The protein belongs to the MsrB Met sulfoxide reductase family. Requires Zn(2+) as cofactor.

The catalysed reaction is L-methionyl-[protein] + [thioredoxin]-disulfide + H2O = L-methionyl-(R)-S-oxide-[protein] + [thioredoxin]-dithiol. This is Peptide methionine sulfoxide reductase MsrB from Polaromonas sp. (strain JS666 / ATCC BAA-500).